Reading from the N-terminus, the 210-residue chain is 7-carboxy-7-deazaguanine synthase (210 aa).

Substrate is bound by residues 12-14 and Arg27; that span reads LQG. In terms of domain architecture, Radical SAM core spans 18–210; sequence QAGRAAVFCR…LQTHKYIGIP (193 aa). [4Fe-4S] cluster contacts are provided by Cys31, Cys46, and Cys49. Residue Thr51 coordinates Mg(2+). Thr90 is a substrate binding site. S-adenosyl-L-methionine-binding positions include Gly92, 133-135, and 173-176; these read SPK and QPMD. Residue Pro210 participates in substrate binding.

The protein belongs to the radical SAM superfamily. 7-carboxy-7-deazaguanine synthase family. In terms of assembly, homodimer. [4Fe-4S] cluster is required as a cofactor. The cofactor is S-adenosyl-L-methionine. It depends on Mg(2+) as a cofactor.

The catalysed reaction is 6-carboxy-5,6,7,8-tetrahydropterin + H(+) = 7-carboxy-7-deazaguanine + NH4(+). It participates in purine metabolism; 7-cyano-7-deazaguanine biosynthesis. In terms of biological role, catalyzes the complex heterocyclic radical-mediated conversion of 6-carboxy-5,6,7,8-tetrahydropterin (CPH4) to 7-carboxy-7-deazaguanine (CDG), a step common to the biosynthetic pathways of all 7-deazapurine-containing compounds. The chain is 7-carboxy-7-deazaguanine synthase from Bordetella pertussis (strain Tohama I / ATCC BAA-589 / NCTC 13251).